The following is a 578-amino-acid chain: Acyl-coenzyme A synthetase ACSM5, mitochondrial (578 aa).

A mitochondrion-targeting transit peptide spans 1 to 22 (MRLWLRGLACQALRSSWGVCRI). Lys96 is subject to N6-acetyllysine; alternate. Residue Lys96 is modified to N6-succinyllysine; alternate. N6-acetyllysine is present on Lys151. An ATP-binding site is contributed by 229–237 (TSGTTGAPK). N6-acetyllysine; alternate is present on Lys302. Lys302 is subject to N6-succinyllysine; alternate. At Lys335 the chain carries N6-acetyllysine. Residues 367–372 (EGYGQS), Asp454, Arg469, and Lys565 each bind ATP.

The protein belongs to the ATP-dependent AMP-binding enzyme family. The cofactor is Mg(2+). Mn(2+) serves as cofactor.

Its subcellular location is the mitochondrion matrix. It catalyses the reaction a medium-chain fatty acid + ATP + CoA = a medium-chain fatty acyl-CoA + AMP + diphosphate. Functionally, catalyzes the activation of fatty acids by CoA to produce an acyl-CoA, the first step in fatty acid metabolism. The polypeptide is Acyl-coenzyme A synthetase ACSM5, mitochondrial (Acsm5) (Mus musculus (Mouse)).